An 850-amino-acid chain; its full sequence is Protein SEY1 (850 aa).

A disordered region spans residues 1–27 (MSDLPPPDLGSEEISVSPTSSSSSFVP). The Cytoplasmic segment spans residues 1-741 (MSDLPPPDLG…KRALIQHVTH (741 aa)). The span at 12–27 (EEISVSPTSSSSSFVP) shows a compositional bias: low complexity. One can recognise a GB1/RHD3-type G domain in the interval 64–297 (NNNYHIVSVF…NEDFLFKKYY (234 aa)). 74–81 (GSQSTGKS) serves as a coordination point for GTP. The chain crosses the membrane as a helical span at residues 742 to 762 (IPYYIYIVILVLGWNEFMAVL). The Lumenal segment spans residues 763 to 765 (RNP). Residues 766–786 (FFFTLLLMLGAGTYVLYHLNL) form a helical membrane-spanning segment. Residues 787 to 850 (LKPAMVVVQR…SDLTPPGEGS (64 aa)) are Cytoplasmic-facing. The segment at 816–850 (QPQEHAKRLSKMAGITEDKPEEIEMSDLTPPGEGS) is disordered.

Belongs to the TRAFAC class dynamin-like GTPase superfamily. GB1/RHD3 GTPase family. RHD3 subfamily.

Its subcellular location is the endoplasmic reticulum membrane. In terms of biological role, cooperates with the reticulon proteins and tubule-shaping DP1 family proteins to generate and maintain the structure of the tubular endoplasmic reticulum network. Has GTPase activity, which is required for its function in ER organization. This Meyerozyma guilliermondii (strain ATCC 6260 / CBS 566 / DSM 6381 / JCM 1539 / NBRC 10279 / NRRL Y-324) (Yeast) protein is Protein SEY1.